The following is a 224-amino-acid chain: Ribosomal RNA small subunit methyltransferase I (224 aa).

The protein belongs to the methyltransferase superfamily. RsmI family.

The protein localises to the cytoplasm. The enzyme catalyses cytidine(1402) in 16S rRNA + S-adenosyl-L-methionine = 2'-O-methylcytidine(1402) in 16S rRNA + S-adenosyl-L-homocysteine + H(+). Functionally, catalyzes the 2'-O-methylation of the ribose of cytidine 1402 (C1402) in 16S rRNA. This is Ribosomal RNA small subunit methyltransferase I from Borrelia garinii subsp. bavariensis (strain ATCC BAA-2496 / DSM 23469 / PBi) (Borreliella bavariensis).